The sequence spans 342 residues: MRTSRVVHVVSCHAEGEVGDVIVGGVAPPPGETVWDQSRWIARDETLRNFVLNEPRGGVFRHVNLLVPPKDPRAQMGWIIMEPADTPPMSGSNAICVATVLLDTGIIPMQEPITRMVLEPPGGLIEVEAECRGGKAERIRVRNVPSFADRLDARIEVEGLGTITVDTAYGGDSFVLVDAASVGMRIAPDQARDLAEMGVRITRAANEQLGFRHPANDWSHISFCQFTDPLSERDGVLYGRNAVAIRPGKIDRSPTGTGCSARMAVLHARGRMKPGDRFVGRSIIDTEFHCSIADEVELNGKRAIRPIISGRAWVIGTKQLMVDPDDPFQNGYRLSDTWPMDL.

Serine 90 serves as the catalytic Proton acceptor. Substrate is bound by residues 91 to 92, aspartate 251, and 256 to 257; these read GS and GT.

It belongs to the proline racemase family.

The catalysed reaction is trans-3-hydroxy-L-proline = 1-pyrroline-2-carboxylate + H2O. Its function is as follows. Catalyzes the dehydration of trans-3-hydroxy-L-proline (t3LHyp) to Delta(1)-pyrroline-2-carboxylate (Pyr2C). Is likely involved in a degradation pathway that converts t3LHyp to L-proline, which would allow P.denitrificans to grow on t3LHyp as a sole carbon source. Displays neither proline racemase activity nor 4-hydroxyproline 2-epimerase activity. The polypeptide is Trans-3-hydroxy-L-proline dehydratase (Paracoccus denitrificans (strain Pd 1222)).